An 80-amino-acid polypeptide reads, in one-letter code: Exodeoxyribonuclease 7 small subunit (80 aa).

Belongs to the XseB family. Heterooligomer composed of large and small subunits.

It is found in the cytoplasm. It catalyses the reaction Exonucleolytic cleavage in either 5'- to 3'- or 3'- to 5'-direction to yield nucleoside 5'-phosphates.. In terms of biological role, bidirectionally degrades single-stranded DNA into large acid-insoluble oligonucleotides, which are then degraded further into small acid-soluble oligonucleotides. The polypeptide is Exodeoxyribonuclease 7 small subunit (Marinomonas sp. (strain MWYL1)).